We begin with the raw amino-acid sequence, 195 residues long: Probable molybdenum cofactor guanylyltransferase (195 aa).

Residues Leu9–Gly11, Lys21, Asp69, and Asp100 contribute to the GTP site. Asp100 contributes to the Mg(2+) binding site.

The protein belongs to the MobA family. Requires Mg(2+) as cofactor.

It localises to the cytoplasm. The catalysed reaction is Mo-molybdopterin + GTP + H(+) = Mo-molybdopterin guanine dinucleotide + diphosphate. Its function is as follows. Transfers a GMP moiety from GTP to Mo-molybdopterin (Mo-MPT) cofactor (Moco or molybdenum cofactor) to form Mo-molybdopterin guanine dinucleotide (Mo-MGD) cofactor. In Geobacillus sp. (strain WCH70), this protein is Probable molybdenum cofactor guanylyltransferase.